A 491-amino-acid chain; its full sequence is UDP-N-acetylmuramate--L-alanine ligase (491 aa).

126–132 lines the ATP pocket; it reads GTHGKTT.

The protein belongs to the MurCDEF family.

Its subcellular location is the cytoplasm. It carries out the reaction UDP-N-acetyl-alpha-D-muramate + L-alanine + ATP = UDP-N-acetyl-alpha-D-muramoyl-L-alanine + ADP + phosphate + H(+). The protein operates within cell wall biogenesis; peptidoglycan biosynthesis. Functionally, cell wall formation. The polypeptide is UDP-N-acetylmuramate--L-alanine ligase (Shigella flexneri).